The following is a 317-amino-acid chain: Pinoresinol reductase 2 (317 aa).

NADP(+)-binding residues include T18, S20, L21, R41, K50, S90, G91, R95, N98, and S121. M125 is a binding site for (-)-pinoresinol. NADP(+) is bound by residues K144 and F166. Catalysis depends on K144, which acts as the Proton acceptor. G178 contributes to the (-)-pinoresinol binding site.

Belongs to the NmrA-type oxidoreductase family. Isoflavone reductase subfamily. Forms homodimers. Expressed in roots. Detected in stems.

The enzyme catalyses (-)-lariciresinol + NADP(+) = (-)-pinoresinol + NADPH + H(+). Functionally, reductase involved in lignan biosynthesis. Unlike conventional pinoresinol reductases that can reduce both pinoresinol and lariciresinol, PRR2 shows a strict substrate selectivity for (-)-pinoresinol. No activity with (+)-pinoresinol or lariciresinol. Abstracts the 4R-hydride from the NADPH cofactor during catalysis. This is Pinoresinol reductase 2 from Arabidopsis thaliana (Mouse-ear cress).